Consider the following 412-residue polypeptide: Gamma-glutamyl phosphate reductase (412 aa).

The protein belongs to the gamma-glutamyl phosphate reductase family.

Its subcellular location is the cytoplasm. The catalysed reaction is L-glutamate 5-semialdehyde + phosphate + NADP(+) = L-glutamyl 5-phosphate + NADPH + H(+). It functions in the pathway amino-acid biosynthesis; L-proline biosynthesis; L-glutamate 5-semialdehyde from L-glutamate: step 2/2. Its function is as follows. Catalyzes the NADPH-dependent reduction of L-glutamate 5-phosphate into L-glutamate 5-semialdehyde and phosphate. The product spontaneously undergoes cyclization to form 1-pyrroline-5-carboxylate. The protein is Gamma-glutamyl phosphate reductase of Actinobacillus pleuropneumoniae serotype 5b (strain L20).